The sequence spans 545 residues: CTP synthase (545 aa).

Residues 1-266 (MITNYIFVTG…DQYICDKFNL (266 aa)) are amidoligase domain. S14 lines the CTP pocket. Residue S14 coordinates UTP. ATP-binding positions include 15 to 20 (SLGKGI) and D72. The Mg(2+) site is built by D72 and E140. CTP-binding positions include 147 to 149 (DIE), 187 to 192 (KTKPTQ), and K223. Residues 187 to 192 (KTKPTQ) and K223 contribute to the UTP site. 239–241 (KDV) is an ATP binding site. The 252-residue stretch at 291 to 542 (SIGMVGKYIE…VKSALAHHQD (252 aa)) folds into the Glutamine amidotransferase type-1 domain. G352 provides a ligand contact to L-glutamine. Residue C379 is the Nucleophile; for glutamine hydrolysis of the active site. L-glutamine contacts are provided by residues 380 to 383 (LGMQ), E403, and R470. Catalysis depends on residues H515 and E517.

The protein belongs to the CTP synthase family. In terms of assembly, homotetramer.

The catalysed reaction is UTP + L-glutamine + ATP + H2O = CTP + L-glutamate + ADP + phosphate + 2 H(+). The enzyme catalyses L-glutamine + H2O = L-glutamate + NH4(+). It carries out the reaction UTP + NH4(+) + ATP = CTP + ADP + phosphate + 2 H(+). It participates in pyrimidine metabolism; CTP biosynthesis via de novo pathway; CTP from UDP: step 2/2. With respect to regulation, allosterically activated by GTP, when glutamine is the substrate; GTP has no effect on the reaction when ammonia is the substrate. The allosteric effector GTP functions by stabilizing the protein conformation that binds the tetrahedral intermediate(s) formed during glutamine hydrolysis. Inhibited by the product CTP, via allosteric rather than competitive inhibition. Catalyzes the ATP-dependent amination of UTP to CTP with either L-glutamine or ammonia as the source of nitrogen. Regulates intracellular CTP levels through interactions with the four ribonucleotide triphosphates. This is CTP synthase from Hamiltonella defensa subsp. Acyrthosiphon pisum (strain 5AT).